A 329-amino-acid polypeptide reads, in one-letter code: 36 kDa antigen (329 aa).

Residues alanine 11 to tyrosine 31 traverse the membrane as a helical segment.

This sequence belongs to the membrane fusion protein (MFP) (TC 8.A.1) family.

It is found in the membrane. This chain is 36 kDa antigen, found in Helicobacter pylori (strain J99 / ATCC 700824) (Campylobacter pylori J99).